Here is a 501-residue protein sequence, read N- to C-terminus: Phenylalanine--tRNA ligase alpha subunit (501 aa).

Thr340 and Phe423 together coordinate L-phenylalanine. Glu425 contributes to the Mg(2+) binding site. Phe448 is an L-phenylalanine binding site.

Belongs to the class-II aminoacyl-tRNA synthetase family. Phe-tRNA synthetase alpha subunit type 2 subfamily. Tetramer of two alpha and two beta subunits. Mg(2+) serves as cofactor.

The protein localises to the cytoplasm. The enzyme catalyses tRNA(Phe) + L-phenylalanine + ATP = L-phenylalanyl-tRNA(Phe) + AMP + diphosphate + H(+). This Methanococcus maripaludis (strain C5 / ATCC BAA-1333) protein is Phenylalanine--tRNA ligase alpha subunit.